A 153-amino-acid polypeptide reads, in one-letter code: Deoxyuridine 5'-triphosphate nucleotidohydrolase (153 aa).

Substrate-binding positions include 71 to 73 (RSG), Asn84, 88 to 90 (TID), and Lys98.

The protein belongs to the dUTPase family. It depends on Mg(2+) as a cofactor.

It catalyses the reaction dUTP + H2O = dUMP + diphosphate + H(+). It participates in pyrimidine metabolism; dUMP biosynthesis; dUMP from dCTP (dUTP route): step 2/2. Its function is as follows. This enzyme is involved in nucleotide metabolism: it produces dUMP, the immediate precursor of thymidine nucleotides and it decreases the intracellular concentration of dUTP so that uracil cannot be incorporated into DNA. The polypeptide is Deoxyuridine 5'-triphosphate nucleotidohydrolase (Wolbachia pipientis wMel).